The sequence spans 382 residues: Mannitol-1-phosphate 5-dehydrogenase (382 aa).

NAD(+) is bound at residue 3–14; that stretch reads ALHFGAGNIGRG.

The protein belongs to the mannitol dehydrogenase family.

The enzyme catalyses D-mannitol 1-phosphate + NAD(+) = beta-D-fructose 6-phosphate + NADH + H(+). This is Mannitol-1-phosphate 5-dehydrogenase from Salmonella dublin (strain CT_02021853).